The following is a 221-amino-acid chain: uncharacterized protein (221 aa).

Residues 33–167 enclose the MOSC domain; the sequence is RPAKSAVMLY…VSPGANLELL (135 aa).

This is an uncharacterized protein from Bacillus subtilis (strain 168).